Here is a 353-residue protein sequence, read N- to C-terminus: Phosphate acyltransferase (353 aa).

The protein belongs to the PlsX family. In terms of assembly, homodimer. Probably interacts with PlsY.

Its subcellular location is the cytoplasm. It carries out the reaction a fatty acyl-[ACP] + phosphate = an acyl phosphate + holo-[ACP]. It functions in the pathway lipid metabolism; phospholipid metabolism. Its function is as follows. Catalyzes the reversible formation of acyl-phosphate (acyl-PO(4)) from acyl-[acyl-carrier-protein] (acyl-ACP). This enzyme utilizes acyl-ACP as fatty acyl donor, but not acyl-CoA. This Ralstonia pickettii (strain 12J) protein is Phosphate acyltransferase.